Consider the following 174-residue polypeptide: MKFAVVFACMVAAVAAQVRYENEFYKKNPYRYSTYRPFVSVTTPTPFLPIPISSVAPVRVVPKVSEGYGAETVKFGNEINPDGSYTYFYETNNGIAAQEQGVPRNLGGNPPAVPVVAQGSFSWTSPEGVPISVNYVADENGYQPTGNAIPTSPPVPEQIARALAYIAKNIPLKK.

A signal peptide spans 1–16 (MKFAVVFACMVAAVAA). The Chitin-binding type R&amp;R domain occupies 82–153 (DGSYTYFYET…PTGNAIPTSP (72 aa)).

In terms of biological role, component of the cuticle of the larva of Bombyx mori. The protein is Larval cuticle protein LCP-22 (LCP22) of Bombyx mori (Silk moth).